The following is a 918-amino-acid chain: DNA ligase 1 (918 aa).

A compositionally biased stretch (polar residues) spans 1-15 (MQRSIMSFFQPTTTE). Residues 1-271 (MQRSIMSFFQ…DPTNYNPSKS (271 aa)) form a disordered region. Residues 16–54 (GKAKKPEKEIPSSIREKEPPPKVALKERNRAVPESDSPV) are compositionally biased toward basic and acidic residues. Residues S50, S52, S66, and S67 each carry the phosphoserine modification. Position 78 is a phosphothreonine (T78). Residues 81–92 (VQKPVSDSKQSS) show a composition bias toward low complexity. A compositionally biased stretch (polar residues) spans 100–114 (PENSPVFNCSPSMDI). Positions 120–130 (PKRRTARKQLP) are enriched in basic residues. N6-acetyllysine is present on K145. T195 carries the post-translational modification Phosphothreonine. The residue at position 227 (K227) is an N6-acetyllysine. A phosphoserine mark is found at S230 and S231. T234 bears the Phosphothreonine mark. Basic and acidic residues predominate over residues 240–259 (VKTEVKQEESDTPRKEETKG). Position 566 (E566) interacts with ATP. Catalysis depends on K568, which acts as the N6-AMP-lysine intermediate. ATP-binding residues include R573 and E621. E621 serves as a coordination point for Mg(2+). Positions 642–644 (KRK) are interaction with target DNA. E720 is a binding site for Mg(2+). Residues K725 and K744 each contribute to the ATP site. T798 is modified (phosphothreonine). 4 positions are modified to phosphoserine: S801, S908, S909, and S913. Residues 881-918 (DKQPEQATTSDQVASLYRKQSQIQNQQSSDLDSDVEDY) are disordered. The span at 885–910 (EQATTSDQVASLYRKQSQIQNQQSSD) shows a compositional bias: polar residues.

Belongs to the ATP-dependent DNA ligase family. Interacts with PCNA. Interacts with POLB. The cofactor is Mg(2+).

It is found in the nucleus. It catalyses the reaction ATP + (deoxyribonucleotide)n-3'-hydroxyl + 5'-phospho-(deoxyribonucleotide)m = (deoxyribonucleotide)n+m + AMP + diphosphate.. Its function is as follows. DNA ligase that seals nicks in double-stranded during DNA repair. Also involved in DNA replication and DNA recombination. This Rattus norvegicus (Rat) protein is DNA ligase 1 (Lig1).